The sequence spans 425 residues: Serine--tRNA ligase (425 aa).

L-serine is bound at residue 233–235 (TAE). ATP contacts are provided by residues 264–266 (RRE) and Val-280. Position 287 (Glu-287) interacts with L-serine. 351–354 (EVSS) contacts ATP. An L-serine-binding site is contributed by Ser-387.

Belongs to the class-II aminoacyl-tRNA synthetase family. Type-1 seryl-tRNA synthetase subfamily. As to quaternary structure, homodimer. The tRNA molecule binds across the dimer.

The protein localises to the cytoplasm. It catalyses the reaction tRNA(Ser) + L-serine + ATP = L-seryl-tRNA(Ser) + AMP + diphosphate + H(+). The catalysed reaction is tRNA(Sec) + L-serine + ATP = L-seryl-tRNA(Sec) + AMP + diphosphate + H(+). Its pathway is aminoacyl-tRNA biosynthesis; selenocysteinyl-tRNA(Sec) biosynthesis; L-seryl-tRNA(Sec) from L-serine and tRNA(Sec): step 1/1. Its function is as follows. Catalyzes the attachment of serine to tRNA(Ser). Is also able to aminoacylate tRNA(Sec) with serine, to form the misacylated tRNA L-seryl-tRNA(Sec), which will be further converted into selenocysteinyl-tRNA(Sec). The chain is Serine--tRNA ligase from Gemmatimonas aurantiaca (strain DSM 14586 / JCM 11422 / NBRC 100505 / T-27).